We begin with the raw amino-acid sequence, 815 residues long: DNA topoisomerase 1 (815 aa).

One can recognise a Toprim domain in the interval 3–119 (KHLLIVESPA…QRIVFTEITP (117 aa)). Mg(2+) contacts are provided by E9 and D82. A Topo IA-type catalytic domain is found at 133–573 (ASDLVDAQQA…KFWVPFKELV (441 aa)). The interval 167–172 (SAGRVQ) is interaction with DNA. The O-(5'-phospho-DNA)-tyrosine intermediate role is filled by Y308. Residues 760–815 (GKPARKNFSTKKTATKNETRKQTTKKRTTDAKATKKVSDKPVKKQIKKRIAPNITE) are disordered. A compositionally biased stretch (basic and acidic residues) spans 774 to 801 (TKNETRKQTTKKRTTDAKATKKVSDKPV).

Belongs to the type IA topoisomerase family. In terms of assembly, monomer. Mg(2+) serves as cofactor.

It catalyses the reaction ATP-independent breakage of single-stranded DNA, followed by passage and rejoining.. In terms of biological role, releases the supercoiling and torsional tension of DNA, which is introduced during the DNA replication and transcription, by transiently cleaving and rejoining one strand of the DNA duplex. Introduces a single-strand break via transesterification at a target site in duplex DNA. The scissile phosphodiester is attacked by the catalytic tyrosine of the enzyme, resulting in the formation of a DNA-(5'-phosphotyrosyl)-enzyme intermediate and the expulsion of a 3'-OH DNA strand. The free DNA strand then undergoes passage around the unbroken strand, thus removing DNA supercoils. Finally, in the religation step, the DNA 3'-OH attacks the covalent intermediate to expel the active-site tyrosine and restore the DNA phosphodiester backbone. This chain is DNA topoisomerase 1, found in Xylella fastidiosa (strain 9a5c).